A 311-amino-acid chain; its full sequence is tRNA dimethylallyltransferase (311 aa).

10-17 (GPTASGKT) lines the ATP pocket. 12–17 (TASGKT) contributes to the substrate binding site. 3 interaction with substrate tRNA regions span residues 35-38 (DSAL), 159-163 (QRINR), and 240-245 (RCVGYR).

It belongs to the IPP transferase family. In terms of assembly, monomer. Requires Mg(2+) as cofactor.

The catalysed reaction is adenosine(37) in tRNA + dimethylallyl diphosphate = N(6)-dimethylallyladenosine(37) in tRNA + diphosphate. Functionally, catalyzes the transfer of a dimethylallyl group onto the adenine at position 37 in tRNAs that read codons beginning with uridine, leading to the formation of N6-(dimethylallyl)adenosine (i(6)A). This Haemophilus influenzae (strain 86-028NP) protein is tRNA dimethylallyltransferase.